A 434-amino-acid polypeptide reads, in one-letter code: MPDRDSYANGTGSSGGGPGGGGSEEASGAGVGSGGASSDAICRDFLRNVCKRGKRCRYRHPDMSEVSNLGVSKNEFIFCHDFQNKECSRPNCRFIHGSKEDEDGYKKTGELPPRLRQKVAAGLGLSPADLPNGKEEVPICRDFLKGDCQRGAKCKFRHLQRDFEFDARGGGGTGGGSTGSVLPGRRHDLYDIYDLPDRGFEDHEPGPKRRRGGCCPPDGPHFESYEYSLAPPRGVECRLLEEENAMLRKRVEELKKQVSNLLATNEVLLEQNAQFRNQAKVITLSSTAPATEQTLAPTVGTVATFNHGIAQTHTTLSSQALQPRPVSQQELVAPAGAPAAPPTNAAPPAAPPPPPPHLTPEITPLSAALAQTIAQGMAPPPVSMAPVAVSVAPVAPVAVSMAQPLAGITMSHTTTPMVTYPIASQSMRITAMPH.

The tract at residues 1–37 (MPDRDSYANGTGSSGGGPGGGGSEEASGAGVGSGGAS) is disordered. Positions 12-35 (GSSGGGPGGGGSEEASGAGVGSGG) are enriched in gly residues. C3H1-type zinc fingers lie at residues 36–63 (ASSD…HPDM), 73–99 (KNEF…HGSK), and 134–161 (KEEV…HLQR). Omega-N-methylarginine is present on residues Arg-185 and Arg-186. Over residues 196 to 207 (PDRGFEDHEPGP) the composition is skewed to basic and acidic residues. Positions 196-217 (PDRGFEDHEPGPKRRRGGCCPP) are disordered. Residues 234-280 (GVECRLLEEENAMLRKRVEELKKQVSNLLATNEVLLEQNAQFRNQAK) adopt a coiled-coil conformation. Polar residues predominate over residues 314–330 (TTLSSQALQPRPVSQQE). The disordered stretch occupies residues 314–362 (TTLSSQALQPRPVSQQELVAPAGAPAAPPTNAAPPAAPPPPPPHLTPEI). Pro residues predominate over residues 339–358 (AAPPTNAAPPAAPPPPPPHL).

It is found in the nucleus. In terms of biological role, specific regulator of miRNA biogenesis. Binds, via the C3H1-type zinc finger domains, to the binding motif 5'-GCAGCGC-3' on microRNA pri-MIR143 and negatively regulates the processing to mature microRNA. This is Zinc finger CCCH domain-containing protein 10 (ZC3H10) from Homo sapiens (Human).